The following is a 204-amino-acid chain: Urease accessory protein UreE (204 aa).

The span at 172–190 shows a compositional bias: basic and acidic residues; that stretch reads HGHAHSHDHDHDHDHDHQH. Residues 172 to 204 form a disordered region; that stretch reads HGHAHSHDHDHDHDHDHQHGPGCTHGHHGHDHH.

The protein belongs to the UreE family.

Its subcellular location is the cytoplasm. Its function is as follows. Involved in urease metallocenter assembly. Binds nickel. Probably functions as a nickel donor during metallocenter assembly. This Burkholderia orbicola (strain AU 1054) protein is Urease accessory protein UreE.